We begin with the raw amino-acid sequence, 471 residues long: MDFQHRPGGKTGSGGVASSSESNRDRRERLRQLALETIDINKDPYFMKNHLGSYECKLCLTLHNNEGSYLAHTQGKKHQTNLARRAAKEAKEAPAQPAPEKVKVEVKKFVKIGRPGYKVTKQRDTEMGQQSLLFQIDYPEIAEGVMPRHRFMSAYEQRIEPPDRRWQYLLMAAEPYETIAFKVPSREIDKAEGKFWTHWNRETKQFFLQFHFKMEKPPAPPSLPAGPPGVKRPPPPLMNGLPPRPPLPDALPPPPPGGLPLPPMPPTGPAPSGPPGPPQMPPPAPGVHPPAPVVHPPTSGVHPPAPGVHPPAPVVHPPTSGVHPPAPGVHPPAPGVHPPAPGVHPPAPGVHPPAPGVHPPAPGVHPPAPGVHPPAPGVHPPPSAGVHPQAPGVHPPAPAVHPQAPGVHPPAPGIHPQAPGVHPQPPPGVHPAAPGVHPQPPGVHPTPMPPMLRPPLPSDGPGNMPPPPPGN.

An N-acetylmethionine modification is found at Met-1. A disordered region spans residues 1-27 (MDFQHRPGGKTGSGGVASSSESNRDRR). Lys-10 is modified (N6-acetyllysine). The Matrin-type zinc finger occupies 54–84 (YECKLCLTLHNNEGSYLAHTQGKKHQTNLAR). Ser-153 is modified (phosphoserine). 4 stretches are compositionally biased toward pro residues: residues 217 to 295 (PPAP…PVVH), 303 to 316 (PPAP…PVVH), 324 to 383 (PPAP…PPPS), and 437 to 471 (HPQP…PPGN). A disordered region spans residues 217-471 (PPAPPSLPAG…GNMPPPPPGN (255 aa)).

It belongs to the SF3A2 family. In terms of assembly, component of the 17S U2 SnRNP complex, a ribonucleoprotein complex that contains small nuclear RNA (snRNA) U2 and a number of specific proteins. Part of the SF3A subcomplex of the 17S U2 SnRNP complex which is composed of three subunits; SF3A3/SAP61, SF3A2/SAP62 and SF3A1/SAP114. SF3A associates with the splicing factor SF3B and a 12S RNA unit to form the mature 17S U2 small nuclear ribonucleoprotein complex (17S U2 snRNP). Identified in the spliceosome 'E' complex, a precursor of the spliceosome 'A' complex. Identified in the spliceosome 'A' and 'B' complexes. Identified in the spliceosome 'C' complex. Interacts with HTATSF1.

It is found in the nucleus. Its function is as follows. Component of the 17S U2 SnRNP complex of the spliceosome, a large ribonucleoprotein complex that removes introns from transcribed pre-mRNAs. The 17S U2 SnRNP complex (1) directly participates in early spliceosome assembly and (2) mediates recognition of the intron branch site during pre-mRNA splicing by promoting the selection of the pre-mRNA branch-site adenosine, the nucleophile for the first step of splicing. Within the 17S U2 SnRNP complex, SF3A2 is part of the SF3A subcomplex that contributes to the assembly of the 17S U2 snRNP, and the subsequent assembly of the pre-spliceosome 'E' complex and the pre-catalytic spliceosome 'A' complex. Involved in pre-mRNA splicing as a component of pre-catalytic spliceosome 'B' complexes, including the Bact complex. Interacts directly with the duplex formed by U2 snRNA and the intron. In Rattus norvegicus (Rat), this protein is Splicing factor 3A subunit 2 (Sf3a2).